The sequence spans 153 residues: MKINVIIIDKKGKDQLYAPLIEHYKKISKPFAKVEVIELFDKEIAKAQDISPEAAQRSYSKALEKYLGSGINIALDPASKEVDSFEFAKLLKDSVTVNFYIGGAYGFERDFLSKCNNAVSFGKITLSHKLVKVVLMEQIFRGLTINHNHPYHK.

S-adenosyl-L-methionine is bound by residues leucine 63, glycine 102, and 121–126 (FGKITL).

This sequence belongs to the RNA methyltransferase RlmH family. In terms of assembly, homodimer.

Its subcellular location is the cytoplasm. The catalysed reaction is pseudouridine(1915) in 23S rRNA + S-adenosyl-L-methionine = N(3)-methylpseudouridine(1915) in 23S rRNA + S-adenosyl-L-homocysteine + H(+). Functionally, specifically methylates the pseudouridine at position 1915 (m3Psi1915) in 23S rRNA. This Sulfurovum sp. (strain NBC37-1) protein is Ribosomal RNA large subunit methyltransferase H.